A 255-amino-acid chain; its full sequence is MRILCTNDDGIHAPGLKVVEEIARALSDDVWVVAPELDQSGVSHSLSLNDPLRLREVGPRHFAVRGTPTDCVIMGARHILADKAPDLVLSGVNRGRNVAEDVVYSGTIAGALEGTILGLPSFALSQEFTLETRNAPLWDTAKAHGPEILRKAIKAGVPKNTVININFPACAPDEVAGVMVTRQGKRNQGFLRIDERHDGRGNPYFWIGFERIAVVDMPAEGTDLAALAAKYVSVTPLRLDRTDEAFSATLAKTLG.

The a divalent metal cation site is built by Asp8, Asp9, Ser40, and Asn93.

The protein belongs to the SurE nucleotidase family. It depends on a divalent metal cation as a cofactor.

Its subcellular location is the cytoplasm. The catalysed reaction is a ribonucleoside 5'-phosphate + H2O = a ribonucleoside + phosphate. Nucleotidase that shows phosphatase activity on nucleoside 5'-monophosphates. The chain is 5'-nucleotidase SurE from Rhodopseudomonas palustris (strain BisB5).